The chain runs to 706 residues: Elongation factor G (706 aa).

The tr-type G domain maps to 8 to 297 (SYVRNIGIGA…AVVDYLPSPN (290 aa)). Residues 17 to 24 (AHIDAGKT), 95 to 99 (DTPGH), and 149 to 152 (NKMD) each bind GTP.

The protein belongs to the TRAFAC class translation factor GTPase superfamily. Classic translation factor GTPase family. EF-G/EF-2 subfamily.

The protein localises to the cytoplasm. Its function is as follows. Catalyzes the GTP-dependent ribosomal translocation step during translation elongation. During this step, the ribosome changes from the pre-translocational (PRE) to the post-translocational (POST) state as the newly formed A-site-bound peptidyl-tRNA and P-site-bound deacylated tRNA move to the P and E sites, respectively. Catalyzes the coordinated movement of the two tRNA molecules, the mRNA and conformational changes in the ribosome. This chain is Elongation factor G, found in Orientia tsutsugamushi (strain Boryong) (Rickettsia tsutsugamushi).